We begin with the raw amino-acid sequence, 369 residues long: Probable serine/threonine-protein kinase DDB_G0291350 (369 aa).

The 346-residue stretch at 22–367 (YTVNRILGEG…QVIERINQII (346 aa)) folds into the Protein kinase domain. ATP-binding positions include 28–36 (LGEGGFSFV) and Lys51. Asp159 (proton acceptor) is an active-site residue. Residues 169–225 (NLRRPSNNNNNNNNNNNNNNNNNNNNNNNNNNNNNNNNNNNNNNNNNNNNNNNSEDS) are disordered. Low complexity predominate over residues 175-221 (NNNNNNNNNNNNNNNNNNNNNNNNNNNNNNNNNNNNNNNNNNNNNNN).

It belongs to the protein kinase superfamily. Ser/Thr protein kinase family.

It carries out the reaction L-seryl-[protein] + ATP = O-phospho-L-seryl-[protein] + ADP + H(+). The catalysed reaction is L-threonyl-[protein] + ATP = O-phospho-L-threonyl-[protein] + ADP + H(+). This Dictyostelium discoideum (Social amoeba) protein is Probable serine/threonine-protein kinase DDB_G0291350.